The chain runs to 47 residues: Light-harvesting protein B800/850/890 alpha-2 chain (47 aa).

At 1 to 12 (MWRMWKILDYRR) the chain is on the cytoplasmic side. The chain crosses the membrane as a helical span at residues 13–33 (TVVLAHVGMAVLALLIHFILL). Histidine 29 serves as a coordination point for a bacteriochlorophyll. At 34–47 (STESFNWLEGNPYG) the chain is on the periplasmic side.

It belongs to the antenna complex alpha subunit family. In terms of assembly, the core complex is formed by different alpha and beta chains, binding bacteriochlorophyll molecules, and arranged most probably in tetrameric structures disposed around the reaction center. The non-pigmented gamma chains may constitute additional components.

The protein resides in the cell inner membrane. Functionally, antenna complexes are light-harvesting systems, which transfer the excitation energy to the reaction centers. This Halorhodospira halophila (strain DSM 244 / SL1) (Ectothiorhodospira halophila (strain DSM 244 / SL1)) protein is Light-harvesting protein B800/850/890 alpha-2 chain.